A 303-amino-acid chain; its full sequence is Heme A synthase (303 aa).

Over 1–8 (MFGKKNLK) the chain is Cytoplasmic. A helical transmembrane segment spans residues 9 to 29 (WLGVVATLMMTFVQLGGALVT). Residues 30–67 (KTGSADGCGSSWPLCHGALIPEFFPIDTIIELSHRAVS) are Extracellular-facing. Cys37 and Cys44 are joined by a disulfide. Residue Glu60 is part of the active site. Position 63 (His63) interacts with heme o. The chain crosses the membrane as a helical span at residues 68–88 (ALSLLMVLWLVITAWKHIGYI). Residues 89–93 (KEIKP) lie on the Cytoplasmic side of the membrane. The helical transmembrane segment at 94–114 (LSIISVGFLLLQALIGAAAVI) threads the bilayer. The Extracellular portion of the chain corresponds to 115-125 (WQQNDYVLALH). His125 lines the heme o pocket. Residues 126 to 146 (FGISLISFSSVFLITLIIFSI) traverse the membrane as a helical segment. Residues 147 to 163 (DQKYEADELYIKKPLRR) lie on the Cytoplasmic side of the membrane. The chain crosses the membrane as a helical span at residues 164 to 184 (LTWLMAIIIYCGVYTGALVRH). The Extracellular portion of the chain corresponds to 185–215 (ADASLAYGGWPLPFHDLVPHSEQDWVQLTHR). His214 is a heme b binding site. Residues 216 to 236 (IMAFIVFTIIMITYIHAVKNY) form a helical membrane-spanning segment. Residues 237–244 (PNNRTVHY) lie on the Cytoplasmic side of the membrane. A helical transmembrane segment spans residues 245-265 (GYTAAFILVILQVITGALSIM). At 266–270 (TNVNL) the chain is on the extracellular side. A helical membrane pass occupies residues 271–291 (LIALFHALFITYLFGMTTYFI). Residue His276 participates in heme b binding. Over 292–303 (MLMLRSVRSDKQ) the chain is Cytoplasmic.

The protein belongs to the COX15/CtaA family. Type 1 subfamily. In terms of assembly, interacts with CtaB. It depends on heme b as a cofactor.

The protein localises to the cell membrane. It catalyses the reaction Fe(II)-heme o + 2 A + H2O = Fe(II)-heme a + 2 AH2. It functions in the pathway porphyrin-containing compound metabolism; heme A biosynthesis; heme A from heme O: step 1/1. In terms of biological role, catalyzes the conversion of heme O to heme A by two successive hydroxylations of the methyl group at C8. The first hydroxylation forms heme I, the second hydroxylation results in an unstable dihydroxymethyl group, which spontaneously dehydrates, resulting in the formyl group of heme A. In Staphylococcus aureus (strain MSSA476), this protein is Heme A synthase.